Reading from the N-terminus, the 137-residue chain is Nucleoside diphosphate kinase (137 aa).

ATP is bound by residues K9, F57, R85, T91, R102, and N112. H115 serves as the catalytic Pros-phosphohistidine intermediate.

Belongs to the NDK family. Homotetramer. Mg(2+) serves as cofactor.

Its subcellular location is the cytoplasm. The enzyme catalyses a 2'-deoxyribonucleoside 5'-diphosphate + ATP = a 2'-deoxyribonucleoside 5'-triphosphate + ADP. The catalysed reaction is a ribonucleoside 5'-diphosphate + ATP = a ribonucleoside 5'-triphosphate + ADP. Major role in the synthesis of nucleoside triphosphates other than ATP. The ATP gamma phosphate is transferred to the NDP beta phosphate via a ping-pong mechanism, using a phosphorylated active-site intermediate. This is Nucleoside diphosphate kinase from Campylobacter jejuni subsp. doylei (strain ATCC BAA-1458 / RM4099 / 269.97).